Here is a 764-residue protein sequence, read N- to C-terminus: MAANPEVFSGRLEGNVAAARRPGSAQEEEGEAAGGALSCVDQGRTIKAEQAGHPTVAMEITSTDFTSTLHLHDAESKELPGDENGLSYTYLSSDKHSHTDSTYFTGISKKGTESPDIKEFSGVGPRSPKEIPTFDSRGLLSSDSGIEMTPAECSEVNKSLADPTEEEKQEAYKYIDISRSPDMKPQQVLDKDFGENKASTIGQAAPTEQQAYDSVTMSWQKDHYNGNISEYLPYVPYMEEPRKDFGLYNSPTSKEPKSAPVTISFTGMETTLQTEYPENQQGKSDKGLKLSPDMVPTVTVSEPEDNSPESITPPSTDADGYTEPSGLEEQRKYKISEDELISAIKAKEGTKGFSSETNEEKQSYSFNVEKQDFTVLPTRDAPAPLDMEGSSTESGDSEIELVSEDQVGAEEAMQSAYMTFSHIGGPPPSPASPSIQYSILREEREAELDSELIIESCDGSSASEESPKRDQDSPMMKPMIMDIIEEENLSRAESFDASDFESCSLKERKLNMENLAESACYLKGTYHTEIRADMPSTKKEELLPQKKSPEGSAYQSKVLGKTSTLPLKPLPFLSKRKAIELLYWRDIKQTGIVFGSVLLMLFSLTQFSVVSVIAYLALAALSATISFRIYKSVLQAVQKTDEGHPFKSYLDMEISLSQEQIQKYTDCLQAYTNSIVKELRRLFLVQDLVDSLKFAVLMWLLTYVGALFNGLTLLIMAVVSMFSLPVVYDKYQAQIDQYLGLVRTNMNTIVTKIQAKIPGTKQKE.

Disordered regions lie at residues 1-37 (MAANPEVFSGRLEGNVAAARRPGSAQEEEGEAAGGAL), 115-147 (PDIKEFSGVGPRSPKEIPTFDSRGLLSSDSGIE), 247-400 (LYNS…SEIE), and 455-475 (ESCDGSSASEESPKRDQDSPM). Residues 261-282 (VTISFTGMETTLQTEYPENQQG) show a composition bias toward polar residues. Positions 328–337 (EEQRKYKISE) are enriched in basic and acidic residues. Residues 578-764 (AIELLYWRDI…AKIPGTKQKE (187 aa)) form the Reticulon domain. The next 2 helical transmembrane spans lie at 607 to 627 (FSVVSVIAYLALAALSATISF) and 696 to 716 (VLMWLLTYVGALFNGLTLLIM).

The protein resides in the endoplasmic reticulum membrane. It is found in the nucleus. Inhibits amyloid precursor protein processing, probably by blocking BACE1 activity. In Xenopus tropicalis (Western clawed frog), this protein is Reticulon-1.